A 417-amino-acid polypeptide reads, in one-letter code: Serine hydroxymethyltransferase (417 aa).

Lys-54 carries the post-translational modification N6-acetyllysine. Residues Leu-121 and 125–127 (GHL) each bind (6S)-5,6,7,8-tetrahydrofolate. Lys-229 is subject to N6-(pyridoxal phosphate)lysine. An N6-acetyllysine mark is found at Lys-250, Lys-285, and Lys-354. Position 355 to 357 (355 to 357 (SPF)) interacts with (6S)-5,6,7,8-tetrahydrofolate. An N6-acetyllysine modification is found at Lys-375.

It belongs to the SHMT family. In terms of assembly, homodimer. Pyridoxal 5'-phosphate serves as cofactor.

It localises to the cytoplasm. It catalyses the reaction (6R)-5,10-methylene-5,6,7,8-tetrahydrofolate + glycine + H2O = (6S)-5,6,7,8-tetrahydrofolate + L-serine. Its pathway is one-carbon metabolism; tetrahydrofolate interconversion. It participates in amino-acid biosynthesis; glycine biosynthesis; glycine from L-serine: step 1/1. Its function is as follows. Catalyzes the reversible interconversion of serine and glycine with tetrahydrofolate (THF) serving as the one-carbon carrier. This reaction serves as the major source of one-carbon groups required for the biosynthesis of purines, thymidylate, methionine, and other important biomolecules. Also exhibits THF-independent aldolase activity toward beta-hydroxyamino acids, producing glycine and aldehydes, via a retro-aldol mechanism. The sequence is that of Serine hydroxymethyltransferase from Escherichia coli O157:H7.